The following is a 50-amino-acid chain: Large ribosomal subunit protein bL33 (50 aa).

Belongs to the bacterial ribosomal protein bL33 family.

This chain is Large ribosomal subunit protein bL33, found in Solibacter usitatus (strain Ellin6076).